We begin with the raw amino-acid sequence, 122 residues long: Large ribosomal subunit protein uL14c (122 aa).

The protein belongs to the universal ribosomal protein uL14 family. In terms of assembly, part of the 50S ribosomal subunit.

It is found in the plastid. The protein localises to the chloroplast. Its function is as follows. Binds to 23S rRNA. The polypeptide is Large ribosomal subunit protein uL14c (Stigeoclonium helveticum (Green alga)).